Reading from the N-terminus, the 289-residue chain is Acetyl-coenzyme A carboxylase carboxyl transferase subunit beta (289 aa).

The CoA carboxyltransferase N-terminal domain occupies 24-289 (LWIKCPESGE…NSPRRAPIPA (266 aa)).

This sequence belongs to the AccD/PCCB family. Acetyl-CoA carboxylase is a heterohexamer composed of biotin carboxyl carrier protein (AccB), biotin carboxylase (AccC) and two subunits each of ACCase subunit alpha (AccA) and ACCase subunit beta (AccD).

The protein localises to the cytoplasm. The enzyme catalyses N(6)-carboxybiotinyl-L-lysyl-[protein] + acetyl-CoA = N(6)-biotinyl-L-lysyl-[protein] + malonyl-CoA. The protein operates within lipid metabolism; malonyl-CoA biosynthesis; malonyl-CoA from acetyl-CoA: step 1/1. In terms of biological role, component of the acetyl coenzyme A carboxylase (ACC) complex. Biotin carboxylase (BC) catalyzes the carboxylation of biotin on its carrier protein (BCCP) and then the CO(2) group is transferred by the transcarboxylase to acetyl-CoA to form malonyl-CoA. The sequence is that of Acetyl-coenzyme A carboxylase carboxyl transferase subunit beta from Beijerinckia indica subsp. indica (strain ATCC 9039 / DSM 1715 / NCIMB 8712).